A 381-amino-acid chain; its full sequence is Chorismate synthase (381 aa).

Arginine 41 and arginine 47 together coordinate NADP(+). Residues 127-129 (RAS), 247-248 (QA), glycine 291, 306-310 (KPIPT), and arginine 332 contribute to the FMN site.

It belongs to the chorismate synthase family. Homotetramer. Requires FMNH2 as cofactor.

The enzyme catalyses 5-O-(1-carboxyvinyl)-3-phosphoshikimate = chorismate + phosphate. It functions in the pathway metabolic intermediate biosynthesis; chorismate biosynthesis; chorismate from D-erythrose 4-phosphate and phosphoenolpyruvate: step 7/7. Functionally, catalyzes the anti-1,4-elimination of the C-3 phosphate and the C-6 proR hydrogen from 5-enolpyruvylshikimate-3-phosphate (EPSP) to yield chorismate, which is the branch point compound that serves as the starting substrate for the three terminal pathways of aromatic amino acid biosynthesis. This reaction introduces a second double bond into the aromatic ring system. The protein is Chorismate synthase of Anaeromyxobacter dehalogenans (strain 2CP-1 / ATCC BAA-258).